The sequence spans 34 residues: Tau-theraphotoxin-Pc1c (34 aa).

Disulfide bonds link C2–C16, C9–C21, and C15–C28. A Phenylalanine amide modification is found at F34.

Belongs to the neurotoxin 10 (Hwtx-1) family. 62 (Vatx) subfamily. Expressed by the venom gland.

It localises to the secreted. Functionally, selectively activates mammalian TRPV1, or capsaicin receptor, a non-selective cation channel expressed by sensory neurons of the pain pathway. Is more potent than VaTx1 and VaTx2. Interacts with distinct regions of the channel than capsaicin, since it only acts on the extracellular face of the channel, and capsaicin binds to the cytosolic side. Also activates avian TRPV1, which is insensitive to capsaicin. In mice, elicits pain-related behaviors, such as licking and flinching of the affected limb. The paw of toxin-injected mice shows substantial edema. This is Tau-theraphotoxin-Pc1c from Psalmopoeus cambridgei (Trinidad chevron tarantula).